Reading from the N-terminus, the 555-residue chain is Transmembrane protein 87A (555 aa).

A signal peptide spans 1 to 21 (MAVAAWLQVSPVIFLLLGAQP). The Lumenal segment spans residues 22–225 (FPLSFLGAGP…YEYLTLEDYP (204 aa)). 2 disulfides stabilise this stretch: Cys74–Cys128 and Cys89–Cys431. Asn79, Asn157, and Asn160 each carry an N-linked (GlcNAc...) asparagine glycan. Residues 226–246 (LMIFFMVMCIVYVLFGVLWLA) form a helical membrane-spanning segment. Residues 247–257 (WSACYWRDLLR) are Cytoplasmic-facing. Residues 258-278 (IQFWIGAVIFLGMFEKAVFYA) traverse the membrane as a helical segment. Residues 279–305 (EFQNIRYKGESVQNALVLAELLSAVKR) are Lumenal-facing. The chain crosses the membrane as a helical span at residues 306-322 (SLARTLVIIVSLGYGIV). Topologically, residues 323–325 (KPR) are cytoplasmic. A helical membrane pass occupies residues 326-346 (LGVTLHKVVVAGALYLLFSGM). Topologically, residues 347–361 (EGVLRVTGAQTDLAS) are lumenal. A helical membrane pass occupies residues 362-382 (LAFIPLAFLDTALCWWIFISL). At 383-403 (TQTMKLLKLRRNIVKLSLYRH) the chain is on the cytoplasmic side. The helical transmembrane segment at 404-424 (FTNTLILAVAASIVFIIWTTM) threads the bilayer. Topologically, residues 425 to 437 (KFRIVTCQSDWRE) are lumenal. A helical membrane pass occupies residues 438 to 458 (LWVDDAIWRLLFSMILFVIMI). Over 459 to 555 (LWRPSANNQR…ITHFERSKME (97 aa)) the chain is Cytoplasmic. The tract at residues 491-515 (SFEGMKMRSTKQEPNGTSKVNKAQE) is disordered. Residues 502 to 511 (QEPNGTSKVN) show a composition bias toward polar residues. Ser540 is subject to Phosphoserine.

This sequence belongs to the LU7TM family. TMEM87 subfamily. In terms of assembly, may interact with STOML3; STOML3 potentiates the mechanosensitive ion channel activity associated with TMEM87A. In terms of tissue distribution, highly expressed in sensory neurons responsive to mechanical force.

It is found in the cell membrane. The protein localises to the golgi apparatus membrane. Its subcellular location is the cell projection. It localises to the ruffle. Functionally, potential monoatomic ion channel gated by mechanical force, implicated in normal touch sensitivity through the generation of mechanically activated currents. However, a direct channel activity is debated and an alternative could be that it functions as a chaperone for an unidentified mechanosensitive ion channel. Could also be involved in cell mechanosensitivity regulating cell adhesion and migration. May also be involved in retrograde transport from endosomes to the trans-Golgi network (TGN). This Mus musculus (Mouse) protein is Transmembrane protein 87A.